A 55-amino-acid chain; its full sequence is Photosystem I reaction center subunit IX (55 aa).

Residues 7–27 (YLSVAPVLSTLWFGSLAGLLI) traverse the membrane as a helical segment.

This sequence belongs to the PsaJ family.

It localises to the plastid. It is found in the chloroplast thylakoid membrane. Functionally, may help in the organization of the PsaE and PsaF subunits. The chain is Photosystem I reaction center subunit IX from Gossypium barbadense (Sea Island cotton).